The primary structure comprises 342 residues: UDP-3-O-acylglucosamine N-acyltransferase (342 aa).

His-253 acts as the Proton acceptor in catalysis.

It belongs to the transferase hexapeptide repeat family. LpxD subfamily. In terms of assembly, homotrimer.

It carries out the reaction a UDP-3-O-[(3R)-3-hydroxyacyl]-alpha-D-glucosamine + a (3R)-hydroxyacyl-[ACP] = a UDP-2-N,3-O-bis[(3R)-3-hydroxyacyl]-alpha-D-glucosamine + holo-[ACP] + H(+). It functions in the pathway bacterial outer membrane biogenesis; LPS lipid A biosynthesis. Functionally, catalyzes the N-acylation of UDP-3-O-acylglucosamine using 3-hydroxyacyl-ACP as the acyl donor. Is involved in the biosynthesis of lipid A, a phosphorylated glycolipid that anchors the lipopolysaccharide to the outer membrane of the cell. This chain is UDP-3-O-acylglucosamine N-acyltransferase, found in Rickettsia canadensis (strain McKiel).